The sequence spans 372 residues: Chloroplast protein FOR GROWTH AND FERTILITY 2 (372 aa).

The segment at Met-1 to Ser-20 is disordered. The N-terminal 78 residues, Met-1–Ser-78, are a transit peptide targeting the chloroplast. Residues Pro-7–Ser-20 are compositionally biased toward polar residues. 7 helical membrane-spanning segments follow: residues Val-109–Phe-129, Phe-161–Leu-181, Ala-195–Leu-215, Val-231–Pro-251, Gly-281–Pro-301, Phe-309–Gly-329, and Leu-352–Tyr-372.

As to expression, mostly expressed in leaves, stems and flowers, to a lower extent, in roots, floral bud, inflorescence and siliques, and, barely, in seedlings.

The protein localises to the plastid. It localises to the chloroplast membrane. It is found in the plastid membrane. Its function is as follows. Together with CGF1, essential protein which supports female gametogenesis and embryogenesis, probably by securing local energy supply. This Arabidopsis thaliana (Mouse-ear cress) protein is Chloroplast protein FOR GROWTH AND FERTILITY 2.